We begin with the raw amino-acid sequence, 105 residues long: Nucleoid-associated protein ABO_1774 (105 aa).

The disordered stretch occupies residues 85 to 105 (QQQDSMQNMAGGFPFPPGFKP).

Belongs to the YbaB/EbfC family. As to quaternary structure, homodimer.

The protein resides in the cytoplasm. It is found in the nucleoid. Binds to DNA and alters its conformation. May be involved in regulation of gene expression, nucleoid organization and DNA protection. The protein is Nucleoid-associated protein ABO_1774 of Alcanivorax borkumensis (strain ATCC 700651 / DSM 11573 / NCIMB 13689 / SK2).